We begin with the raw amino-acid sequence, 2197 residues long: Activating signal cointegrator 1 complex subunit 3 (2197 aa).

Serine 12 carries the post-translational modification Phosphoserine. 2 coiled-coil regions span residues lysine 18–isoleucine 80 and isoleucine 328–glutamate 356. The 184-residue stretch at aspartate 487–leucine 670 folds into the Helicase ATP-binding 1 domain. Residue alanine 500–threonine 507 coordinates ATP. Lysine 573 carries the N6-acetyllysine modification. Positions aspartate 612–histidine 615 match the DEVH box motif. A Helicase C-terminal 1 domain is found at glutamine 697 to valine 915. The SEC63 1 domain maps to serine 979–phenylalanine 1288. The Helicase ATP-binding 2 domain maps to histidine 1337 to phenylalanine 1512. Alanine 1350–threonine 1357 provides a ligand contact to ATP. A DEIH box motif is present at residues aspartate 1454 to histidine 1457. One can recognise a Helicase C-terminal 2 domain in the interval arginine 1565–isoleucine 1739. The 364-residue stretch at proline 1812–isoleucine 2175 folds into the SEC63 2 domain.

The protein belongs to the helicase family. In terms of assembly, identified in the ASCC complex that contains ASCC1, ASCC2 and ASCC3. Functions as a scaffolding subunit that interacts directly with both ASCC1 and ASCC2. Interacts directly with ALKBH3, and thereby recruits ALKBH3 to the ASCC complex. Part of the ASC-1/TRIP4 complex, that contains TRIP4, ASCC1, ASCC2 and ASCC3. Part of the RQT (ribosome quality control trigger) complex, that contains ASCC2, ASCC3 and TRIP4. Associates with ribosomes; recruited to collided ribosomes. Interacts with ZCCHC4. Interacts with ZNF598. Interacts with RPS3.

It is found in the nucleus. The protein localises to the nucleus speckle. The protein resides in the cytoplasm. It localises to the cytosol. The catalysed reaction is Couples ATP hydrolysis with the unwinding of duplex DNA by translocating in the 3'-5' direction.. It carries out the reaction ATP + H2O = ADP + phosphate + H(+). ATPase involved both in DNA repair and rescue of stalled ribosomes. 3'-5' DNA helicase involved in repair of alkylated DNA: promotes DNA unwinding to generate single-stranded substrate needed for ALKBH3, enabling ALKBH3 to process alkylated N3-methylcytosine (3mC) within double-stranded regions. Also involved in activation of the ribosome quality control (RQC) pathway, a pathway that degrades nascent peptide chains during problematic translation. Drives the splitting of stalled ribosomes that are ubiquitinated in a ZNF598-dependent manner, as part of the ribosome quality control trigger (RQT) complex. Part of the ASC-1 complex that enhances NF-kappa-B, SRF and AP1 transactivation. The chain is Activating signal cointegrator 1 complex subunit 3 (Ascc3) from Rattus norvegicus (Rat).